The following is a 2464-amino-acid chain: Highly reducing polyketide synthase xilA (2464 aa).

Residues H9 to H437 form the Ketosynthase family 3 (KS3) domain. Catalysis depends on for beta-ketoacyl synthase activity residues C182, H318, and H360. Residues Q461–G487 are compositionally biased toward low complexity. The tract at residues Q461 to A495 is disordered. One can recognise a Malonyl-CoA:ACP transacylase (MAT) domain in the interval F589–L911. Residues H983 to F1121 are N-terminal hotdog fold. In terms of domain architecture, PKS/mFAS DH spans H983–S1286. H1015 serves as the catalytic Proton acceptor; for dehydratase activity. The C-terminal hotdog fold stretch occupies residues G1133–S1286. Catalysis depends on D1199, which acts as the Proton donor; for dehydratase activity. The methyltransferase (CMeT) domain stretch occupies residues N1282–T1490. An Enoyl reductase (ER) domain is found at G1716–I2028. The region spanning A2052–N2231 is the Ketoreductase (KR) domain. The 79-residue stretch at E2383 to A2461 folds into the Carrier domain. At S2420 the chain carries O-(pantetheine 4'-phosphoryl)serine.

Pantetheine 4'-phosphate serves as cofactor.

The protein operates within secondary metabolite biosynthesis. Highly reducing polyketide synthase; part of the gene cluster that mediates the biosynthesis of the 6-methyl-2-pyrone derivative xylariolide D. XilA produces the 5-alkyl-6-methyl-2-pyrone backbone called prexylariolide D via sequential condensations of 4 malonyl-CoA units with one acetyl-CoA starter unit. During the biosynthesis, the linear polyketide chain is branched by the addition of an acetyl unit as the origin of the methyl group at the 2-pyrone ring. Prexylariolide D is then hydroxylated at the side chain by xilC to form the final product, xylariolide D. The protein is Highly reducing polyketide synthase xilA of Penicillium rubens (strain ATCC 28089 / DSM 1075 / NRRL 1951 / Wisconsin 54-1255) (Penicillium chrysogenum).